The following is a 183-amino-acid chain: Outer membrane protein H.8 (183 aa).

The first 17 residues, Met1 to Ala17, serve as a signal peptide directing secretion. Cys18 carries N-palmitoyl cysteine lipidation. A lipid anchor (S-diacylglycerol cysteine) is attached at Cys18. Residues Ala27–Ala51 are disordered. In terms of domain architecture, Plastocyanin-like spans Gly57–Asp183. Positions 102, 166, 171, and 175 each coordinate Cu cation.

Cu cation serves as cofactor.

Its subcellular location is the cell outer membrane. This chain is Outer membrane protein H.8, found in Neisseria gonorrhoeae.